Consider the following 187-residue polypeptide: uncharacterized protein (187 aa).

This is an uncharacterized protein from Manihot esculenta (Cassava).